The sequence spans 765 residues: Probable dehydratase PflD (765 aa).

The region spanning 3 to 637 is the PFL domain; sequence NRISRLKTAL…VVGATPDGRF (635 aa). The Glycine radical domain maps to 645 to 765; the sequence is GGLSPMLGQD…DIIRRTAHQL (121 aa). Glycine radical is present on Gly-741.

The protein belongs to the glycyl radical enzyme (GRE) family.

Its function is as follows. Probably shows dehydratase activity. In Escherichia coli (strain K12), this protein is Probable dehydratase PflD (pflD).